The sequence spans 147 residues: MAKEILNIEDLLKPETLEVAIDGKYLIVPTLSDGFTGTVAGGYAYAVTKKGTDYTVNELIYNQKDNTFKPSDEPIIITDDNEIFFITRTLEDPYNYPVVATEKLKTKDVKEKQVLQAFLAFADDRFKLGVYNVFLADEPFVYGDKTE.

The protein resides in the virion. This Enterococcus faecalis (Streptococcus faecalis) protein is Virion protein 4.